Here is a 539-residue protein sequence, read N- to C-terminus: Diacylglycerol O-acyltransferase 1 (539 aa).

Residues 1–104 (MAISDMPEST…NDGGEKIANG (104 aa)) are disordered. Polar residues predominate over residues 33 to 52 (TETTEVSDSNSKTTDPDSGN). The span at 56-80 (ESVRVRDSSTDESLARKSCEDDGSR) shows a compositional bias: basic and acidic residues. 7 helical membrane passes run 143 to 163 (HAGL…RLII), 187 to 207 (WPLL…FVVE), 219 to 239 (VVLL…VFVI), 244 to 264 (SVVL…LKLV), 294 to 314 (YPYS…TLCY), 334 to 354 (VKLI…INPI), and 383 to 403 (VWLC…AELL). The short motif at 410–416 (FYKDWWN) is the FYXDWWN motif element. Transmembrane regions (helical) follow at residues 451-471 (GVAI…CIAV), 473-493 (CHIF…LVLI), and 506-526 (VGNM…CVLL). Histidine 465 is a catalytic residue.

It belongs to the membrane-bound acyltransferase family. Sterol o-acyltransferase subfamily.

The protein resides in the endoplasmic reticulum membrane. It catalyses the reaction an acyl-CoA + a 1,2-diacyl-sn-glycerol = a triacyl-sn-glycerol + CoA. Its pathway is glycerolipid metabolism; triacylglycerol biosynthesis. In terms of biological role, major contributor to triacylglycerol (TAG) synthesis and oil accumulation in developing seeds. Catalyzes the acylation of the sn-3 hydroxy group of sn-1,2-diacylglycerol using acyl-CoA. Has a marked preference for oleoyl-CoA as substrate. In Corylus americana (American hazelnut), this protein is Diacylglycerol O-acyltransferase 1.